The chain runs to 418 residues: Glutamyl-tRNA reductase (418 aa).

Substrate contacts are provided by residues 49-52, serine 109, 114-116, and glutamine 120; these read TCNR and EPQ. Cysteine 50 functions as the Nucleophile in the catalytic mechanism. 189–194 contacts NADP(+); sequence GAGETI.

This sequence belongs to the glutamyl-tRNA reductase family. As to quaternary structure, homodimer.

It carries out the reaction (S)-4-amino-5-oxopentanoate + tRNA(Glu) + NADP(+) = L-glutamyl-tRNA(Glu) + NADPH + H(+). It functions in the pathway porphyrin-containing compound metabolism; protoporphyrin-IX biosynthesis; 5-aminolevulinate from L-glutamyl-tRNA(Glu): step 1/2. In terms of biological role, catalyzes the NADPH-dependent reduction of glutamyl-tRNA(Glu) to glutamate 1-semialdehyde (GSA). The sequence is that of Glutamyl-tRNA reductase from Klebsiella pneumoniae (strain 342).